The chain runs to 231 residues: MCGNNMSVPLLTDAATVSGAERETAAVIFLHGLGDTGHSWADALSTIRLPHVKYICPHAPRIPVTLNMKMVMPSWFDLMGLSPDAPEDEAGIKKAAENIKALIEHEMKNGIPANRIVLGGFSQGGALSLYTALTCPHPLAGIVALSCWLPLHRNFPQAANGSAKDLAILQCHGELDPMVPVRFGALTAEKLRTVVTPARVQFKTYPGVMHSSCPQEMAAVKEFLEKLLPPV.

Cys-2 carries S-palmitoyl cysteine lipidation. Position 82 is a phosphoserine (Ser-82). Catalysis depends on charge relay system residues Ser-122, Asp-176, and His-210.

This sequence belongs to the AB hydrolase superfamily. AB hydrolase 2 family.

Its subcellular location is the cytoplasm. The enzyme catalyses S-hexadecanoyl-L-cysteinyl-[protein] + H2O = L-cysteinyl-[protein] + hexadecanoate + H(+). It carries out the reaction prostaglandin E2 1-glyceryl ester + H2O = prostaglandin E2 + glycerol + H(+). It catalyses the reaction 1-hexadecanoyl-sn-glycero-3-phosphocholine + H2O = sn-glycerol 3-phosphocholine + hexadecanoate + H(+). The catalysed reaction is 1-octadecanoyl-sn-glycero-3-phosphocholine + H2O = octadecanoate + sn-glycerol 3-phosphocholine + H(+). The enzyme catalyses 1-hexadecanoyl-sn-glycero-3-phosphate + H2O = sn-glycerol 3-phosphate + hexadecanoate + H(+). It carries out the reaction 1-hexadecanoyl-sn-glycero-3-phospho-L-serine + H2O = sn-glycero-3-phospho-L-serine + hexadecanoate + H(+). Functionally, acts as an acyl-protein thioesterase hydrolyzing fatty acids from S-acylated cysteine residues in proteins such as trimeric G alpha proteins, GSDMD, GAP43, ZDHHC6 or HRAS. Deacylates GAP43. Mediates depalmitoylation of ZDHHC6. Has lysophospholipase activity. Hydrolyzes prostaglandin glycerol esters (PG-Gs) in the following order prostaglandin D2-glycerol ester (PGD2-G) &gt; prostaglandin E2 glycerol ester (PGE2-G) &gt; prostaglandin F2-alpha-glycerol ester (PGF2-alpha-G). Hydrolyzes 1-arachidonoylglycerol but not 2-arachidonoylglycerol or arachidonoylethanolamide. The protein is Acyl-protein thioesterase 2 (Lypla2) of Rattus norvegicus (Rat).